We begin with the raw amino-acid sequence, 520 residues long: Cytochrome P450 1A1 (520 aa).

Position 230 (Phe230) interacts with substrate. Position 464 (Cys464) interacts with heme.

Belongs to the cytochrome P450 family. Heme serves as cofactor.

The protein localises to the endoplasmic reticulum membrane. Its subcellular location is the microsome membrane. The enzyme catalyses an organic molecule + reduced [NADPH--hemoprotein reductase] + O2 = an alcohol + oxidized [NADPH--hemoprotein reductase] + H2O + H(+). Its function is as follows. Cytochromes P450 are a group of heme-thiolate monooxygenases. In liver microsomes, this enzyme is involved in an NADPH-dependent electron transport pathway. It oxidizes a variety of structurally unrelated compounds, including steroids, fatty acids, and xenobiotics. In Dicentrarchus labrax (European seabass), this protein is Cytochrome P450 1A1 (cyp1a1).